Here is a 439-residue protein sequence, read N- to C-terminus: Chitinase-like protein Idgf1 (439 aa).

The signal sequence occupies residues 1-20 (MRFQLCYLLGLLSVTSLSHA). The GH18 domain occupies 22–439 (SNLICYYDST…IVRSIKYFMG (418 aa)). Residues cysteine 26 and cysteine 53 are joined by a disulfide bond. Asparagine 122, asparagine 218, and asparagine 346 each carry an N-linked (GlcNAc...) asparagine glycan. Cysteine 340 and cysteine 423 are oxidised to a cystine.

The protein belongs to the glycosyl hydrolase 18 family. IDGF subfamily. Post-translationally, glycosylated.

The protein resides in the secreted. In terms of biological role, cooperates with insulin-like peptides to stimulate the proliferation, polarization and motility of imaginal disk cells. May act by stabilizing the binding of insulin-like peptides to its receptor through a simultaneous interaction with both molecules to form a multiprotein signaling complex. The protein is Chitinase-like protein Idgf1 (Idgf1) of Drosophila yakuba (Fruit fly).